Here is a 172-residue protein sequence, read N- to C-terminus: AIG2-like protein B (172 aa).

Residue 15 to 20 (YGSFQE) participates in substrate binding. Glu83 functions as the Proton acceptor in the catalytic mechanism. Over residues 146-165 (KRNPQGKGRDDFSNVLKEED) the composition is skewed to basic and acidic residues. Residues 146–172 (KRNPQGKGRDDFSNVLKEEDPANAPSS) form a disordered region.

The protein belongs to the gamma-glutamylcyclotransferase family. Expressed in flowerss, leaves, stems, seeds and roots.

Its subcellular location is the cell membrane. Functionally, putative gamma-glutamylcyclotransferase. The chain is AIG2-like protein B from Arabidopsis thaliana (Mouse-ear cress).